The following is a 228-amino-acid chain: RNA-free ribonuclease P (228 aa).

The protein belongs to the HARP family.

It catalyses the reaction Endonucleolytic cleavage of RNA, removing 5'-extranucleotides from tRNA precursor.. In terms of biological role, RNA-free RNase P that catalyzes the removal of the 5'-leader sequence from pre-tRNA to produce the mature 5'-terminus. The protein is RNA-free ribonuclease P of Methanopyrus kandleri (strain AV19 / DSM 6324 / JCM 9639 / NBRC 100938).